A 422-amino-acid chain; its full sequence is Serine/threonine-protein kinase H1 homolog (422 aa).

Residues 35 to 80 are disordered; it reads FIKYDGGGEKTGSPSPQGQSQAVAKVSQSPPPANDQPEPADSHRKK. A compositionally biased stretch (polar residues) spans 46-62; sequence GSPSPQGQSQAVAKVSQ. Residues 96–353 form the Protein kinase domain; the sequence is YDIKALIGRG…AGQALKHPWI (258 aa). ATP is bound by residues 102-110 and Lys125; that span reads IGRGSFSRV. Asp216 serves as the catalytic Proton acceptor. Positions 376–422 are disordered; that stretch reads RASSRCHSTKSSQSTRSSRSTKSSKARRLREKELRELNRRYQQQCNG. Residues 384–396 are compositionally biased toward low complexity; the sequence is TKSSQSTRSSRST. A compositionally biased stretch (basic and acidic residues) spans 405–414; that stretch reads REKELRELNR.

It belongs to the protein kinase superfamily. CAMK Ser/Thr protein kinase family.

It catalyses the reaction L-seryl-[protein] + ATP = O-phospho-L-seryl-[protein] + ADP + H(+). The catalysed reaction is L-threonyl-[protein] + ATP = O-phospho-L-threonyl-[protein] + ADP + H(+). The protein is Serine/threonine-protein kinase H1 homolog (pskh1) of Danio rerio (Zebrafish).